The primary structure comprises 122 residues: Large ribosomal subunit protein bL12 (122 aa).

Belongs to the bacterial ribosomal protein bL12 family. As to quaternary structure, homodimer. Part of the ribosomal stalk of the 50S ribosomal subunit. Forms a multimeric L10(L12)X complex, where L10 forms an elongated spine to which 2 to 4 L12 dimers bind in a sequential fashion. Binds GTP-bound translation factors.

In terms of biological role, forms part of the ribosomal stalk which helps the ribosome interact with GTP-bound translation factors. Is thus essential for accurate translation. The polypeptide is Large ribosomal subunit protein bL12 (Yersinia enterocolitica serotype O:8 / biotype 1B (strain NCTC 13174 / 8081)).